The primary structure comprises 583 residues: Fumarate reductase flavoprotein subunit (583 aa).

FAD-binding positions include 11–15, 35–37, 43–51, 155–157, and aspartate 211; these read GGGGA, VSK, SHTVSAEGG, and WFA. Position 44 is a tele-8alpha-FAD histidine (histidine 44). Residues histidine 232 and arginine 248 contribute to the active site. FAD-binding positions include 353–354, glutamate 377, and 388–394; these read HY and RLGSNSL.

It belongs to the FAD-dependent oxidoreductase 2 family. FRD/SDH subfamily. Part of an enzyme complex containing four subunits: a flavoprotein (FrdA), an iron-sulfur protein (FrdB), and two hydrophobic anchor proteins (FrdC and FrdD). Requires FAD as cofactor.

It localises to the cell membrane. It catalyses the reaction a quinone + succinate = fumarate + a quinol. The enzyme catalyses a menaquinone + succinate = a menaquinol + fumarate. In Mycobacterium tuberculosis (strain CDC 1551 / Oshkosh), this protein is Fumarate reductase flavoprotein subunit (frdA).